The sequence spans 409 residues: Probable ATP-dependent RNA helicase MG308 homolog (409 aa).

Residues 26-179 (VFKVWPRQNV…RKQVAPLTVV (154 aa)) form the Helicase ATP-binding domain. Residue 39 to 46 (AETGSGKT) participates in ATP binding. Residues 126–129 (DEVD) carry the DEVD box motif. The Helicase C-terminal domain maps to 190-349 (LVKHFLLNLN…SVHLERDGTL (160 aa)).

This sequence belongs to the DEAD box helicase family.

The enzyme catalyses ATP + H2O = ADP + phosphate + H(+). The polypeptide is Probable ATP-dependent RNA helicase MG308 homolog (Mycoplasma pneumoniae (strain ATCC 29342 / M129 / Subtype 1) (Mycoplasmoides pneumoniae)).